The primary structure comprises 327 residues: tRNA uridine(34) hydroxylase (327 aa).

The Rhodanese domain maps to 130 to 224; sequence LDEDTVVLDT…YGKDPEVQGE (95 aa). Cys-184 serves as the catalytic Cysteine persulfide intermediate.

It belongs to the TrhO family.

It carries out the reaction uridine(34) in tRNA + AH2 + O2 = 5-hydroxyuridine(34) in tRNA + A + H2O. Catalyzes oxygen-dependent 5-hydroxyuridine (ho5U) modification at position 34 in tRNAs. The protein is tRNA uridine(34) hydroxylase of Streptococcus thermophilus (strain ATCC BAA-250 / LMG 18311).